Consider the following 161-residue polypeptide: EP300-interacting inhibitor of differentiation 2B (161 aa).

Disordered regions lie at residues 1 to 26 and 54 to 77; these read MAEP…GTAS and ARSM…GLAS.

As to quaternary structure, homodimer and heterodimer with EID2. Interacts with HDAC1 and HDAC2.

The protein resides in the nucleus. In terms of biological role, acts as a repressor of MYOD-dependent transcription, glucocorticoid receptor-dependent transcription, and muscle differentiation. The polypeptide is EP300-interacting inhibitor of differentiation 2B (Homo sapiens (Human)).